The chain runs to 89 residues: Small ribosomal subunit protein uS14A (89 aa).

It belongs to the universal ribosomal protein uS14 family. As to quaternary structure, part of the 30S ribosomal subunit. Contacts proteins S3 and S10.

Its function is as follows. Binds 16S rRNA, required for the assembly of 30S particles and may also be responsible for determining the conformation of the 16S rRNA at the A site. This chain is Small ribosomal subunit protein uS14A, found in Ligilactobacillus salivarius (strain UCC118) (Lactobacillus salivarius).